A 350-amino-acid chain; its full sequence is Histidinol-phosphate aminotransferase 2 (350 aa).

The residue at position 210 (K210) is an N6-(pyridoxal phosphate)lysine.

This sequence belongs to the class-II pyridoxal-phosphate-dependent aminotransferase family. Histidinol-phosphate aminotransferase subfamily. In terms of assembly, homodimer. The cofactor is pyridoxal 5'-phosphate.

It catalyses the reaction L-histidinol phosphate + 2-oxoglutarate = 3-(imidazol-4-yl)-2-oxopropyl phosphate + L-glutamate. The protein operates within amino-acid biosynthesis; L-histidine biosynthesis; L-histidine from 5-phospho-alpha-D-ribose 1-diphosphate: step 7/9. In Mannheimia succiniciproducens (strain KCTC 0769BP / MBEL55E), this protein is Histidinol-phosphate aminotransferase 2.